A 253-amino-acid chain; its full sequence is Shikimate dehydrogenase (253 aa).

The active-site Proton acceptor is K63. 115–119 (GAGGA) provides a ligand contact to NADP(+).

This sequence belongs to the shikimate dehydrogenase family.

The enzyme catalyses shikimate + NADP(+) = 3-dehydroshikimate + NADPH + H(+). The protein operates within metabolic intermediate biosynthesis; chorismate biosynthesis; chorismate from D-erythrose 4-phosphate and phosphoenolpyruvate: step 4/7. This Thermotoga neapolitana (strain ATCC 49049 / DSM 4359 / NBRC 107923 / NS-E) protein is Shikimate dehydrogenase (aroE).